A 159-amino-acid polypeptide reads, in one-letter code: NAD(P)H-quinone oxidoreductase subunit J, chloroplastic (159 aa).

Belongs to the complex I 30 kDa subunit family. As to quaternary structure, NDH is composed of at least 16 different subunits, 5 of which are encoded in the nucleus.

It localises to the plastid. Its subcellular location is the chloroplast thylakoid membrane. The catalysed reaction is a plastoquinone + NADH + (n+1) H(+)(in) = a plastoquinol + NAD(+) + n H(+)(out). The enzyme catalyses a plastoquinone + NADPH + (n+1) H(+)(in) = a plastoquinol + NADP(+) + n H(+)(out). In terms of biological role, NDH shuttles electrons from NAD(P)H:plastoquinone, via FMN and iron-sulfur (Fe-S) centers, to quinones in the photosynthetic chain and possibly in a chloroplast respiratory chain. The immediate electron acceptor for the enzyme in this species is believed to be plastoquinone. Couples the redox reaction to proton translocation, and thus conserves the redox energy in a proton gradient. This Brachypodium distachyon (Purple false brome) protein is NAD(P)H-quinone oxidoreductase subunit J, chloroplastic.